The chain runs to 301 residues: Acidic endochitinase (301 aa).

A signal peptide spans 1–25; that stretch reads MARTPQSTPLLISLSVLALLQTSYA. A GH18 domain is found at 26–301; sequence GGIAIYWGQN…GYSSSIKSSV (276 aa). 2 disulfides stabilise this stretch: Cys45-Cys92 and Cys75-Cys82. The Proton donor role is filled by Glu152. Cys187 and Cys216 are disulfide-bonded.

The protein belongs to the glycosyl hydrolase 18 family. Chitinase class II subfamily.

It catalyses the reaction Random endo-hydrolysis of N-acetyl-beta-D-glucosaminide (1-&gt;4)-beta-linkages in chitin and chitodextrins.. Functionally, defense against chitin containing fungal pathogens. The sequence is that of Acidic endochitinase (CHIT3) from Vitis vinifera (Grape).